The chain runs to 618 residues: MPEYTLLADNIRENIVHFDPNGLFDNLHTIVHEDDSQENEEAEHFNYDQVLDKSLLSRGSIVGLGLGLMSPVLGMCTSMAIGLINGGPLTIMLGFLISGVCIWFSSLSLGEIVSKFPMELHVGSAMLAPEKLKLVCSWYTGWLMLIGNWTMSTSITFAGAQLTISLILMTNSNLISEAHLIFYTVIVFYLVVTVVGLVNLKFARFIETINKVCVYWIIYAIIFIDILLLVFHKGKFRSLKYALFHFDNNLSGYKSAFLSFIIGFQQSNFTLQGFSMLPALADEVKVPEKDIPRGMSNAVLLSAFSGVIFLIPIMLILPDNDLLFTNHKVLPIVNIFTKSTDSVVLSFFLVLLILGNLLFSGIGSITTSSRAVYSFSRDQAIPYYDKWTYVEPDSQSKVPKNSVVLSMIISYFLGLLALISTAAFNAFIGAAVLCLCSATFIPLVLVLFTRRRAIRSAPVKIRYKFGWFINIVSIVWLLLSMVSVCLPTQVPVTFKTMNYALMVYVFCILVITGLYFKWGKYNFRLPLADDIKAPIPSDAEETVFELEDSNVEHTLNSGTTVKESVENNSEEGFIKVHPKSSTENPFEENEENVITDYGDEHHTAEQEFDLADDRRYDI.

Residues 1–60 are Cytoplasmic-facing; the sequence is MPEYTLLADNIRENIVHFDPNGLFDNLHTIVHEDDSQENEEAEHFNYDQVLDKSLLSRGS. The helical transmembrane segment at 61–84 threads the bilayer; the sequence is IVGLGLGLMSPVLGMCTSMAIGLI. The Extracellular portion of the chain corresponds to 85 to 90; it reads NGGPLT. A helical transmembrane segment spans residues 91–110; it reads IMLGFLISGVCIWFSSLSLG. Over 111–131 the chain is Cytoplasmic; that stretch reads EIVSKFPMELHVGSAMLAPEK. Residues 132-148 form a helical membrane-spanning segment; sequence LKLVCSWYTGWLMLIGN. The Extracellular portion of the chain corresponds to 149-154; the sequence is WTMSTS. Residues 155-171 form a helical membrane-spanning segment; that stretch reads ITFAGAQLTISLILMTN. The Cytoplasmic segment spans residues 172 to 179; sequence SNLISEAH. Residues 180-200 form a helical membrane-spanning segment; that stretch reads LIFYTVIVFYLVVTVVGLVNL. Residues 201–211 are Extracellular-facing; sequence KFARFIETINK. The helical transmembrane segment at 212–231 threads the bilayer; it reads VCVYWIIYAIIFIDILLLVF. The Cytoplasmic portion of the chain corresponds to 232-297; that stretch reads HKGKFRSLKY…EKDIPRGMSN (66 aa). The helical transmembrane segment at 298–317 threads the bilayer; that stretch reads AVLLSAFSGVIFLIPIMLIL. Residues 318–342 lie on the Extracellular side of the membrane; that stretch reads PDNDLLFTNHKVLPIVNIFTKSTDS. Residues 343–367 traverse the membrane as a helical segment; it reads VVLSFFLVLLILGNLLFSGIGSITT. The Cytoplasmic segment spans residues 368 to 402; the sequence is SSRAVYSFSRDQAIPYYDKWTYVEPDSQSKVPKNS. Residues 403–419 form a helical membrane-spanning segment; that stretch reads VVLSMIISYFLGLLALI. Topologically, residues 420 to 425 are extracellular; it reads STAAFN. A helical transmembrane segment spans residues 426–449; it reads AFIGAAVLCLCSATFIPLVLVLFT. At 450–464 the chain is on the cytoplasmic side; it reads RRRAIRSAPVKIRYK. Residues 465–486 form a helical membrane-spanning segment; it reads FGWFINIVSIVWLLLSMVSVCL. Residues 487–498 are Extracellular-facing; that stretch reads PTQVPVTFKTMN. The chain crosses the membrane as a helical span at residues 499–516; it reads YALMVYVFCILVITGLYF. Residues 517-618 lie on the Cytoplasmic side of the membrane; sequence KWGKYNFRLP…DLADDRRYDI (102 aa). Phosphoserine is present on Ser-569. Positions 576 to 618 are disordered; it reads VHPKSSTENPFEENEENVITDYGDEHHTAEQEFDLADDRRYDI. Basic and acidic residues predominate over residues 598–618; that stretch reads GDEHHTAEQEFDLADDRRYDI.

It belongs to the amino acid-polyamine-organocation (APC) superfamily.

The protein localises to the golgi apparatus membrane. Functionally, required for polyamine transport. Transports putrescine effectively and spermidine less effectively. The chain is Polyamine transporter TPO5 (TPO5) from Saccharomyces cerevisiae (strain ATCC 204508 / S288c) (Baker's yeast).